Consider the following 865-residue polypeptide: Alanine--tRNA ligase (865 aa).

The Zn(2+) site is built by His-552, His-556, Cys-654, and His-658.

This sequence belongs to the class-II aminoacyl-tRNA synthetase family. It depends on Zn(2+) as a cofactor.

The protein localises to the cytoplasm. It catalyses the reaction tRNA(Ala) + L-alanine + ATP = L-alanyl-tRNA(Ala) + AMP + diphosphate. In terms of biological role, catalyzes the attachment of alanine to tRNA(Ala) in a two-step reaction: alanine is first activated by ATP to form Ala-AMP and then transferred to the acceptor end of tRNA(Ala). Also edits incorrectly charged Ser-tRNA(Ala) and Gly-tRNA(Ala) via its editing domain. The protein is Alanine--tRNA ligase of Coxiella burnetii (strain Dugway 5J108-111).